A 45-amino-acid chain; its full sequence is Cytochrome b559 subunit beta (45 aa).

The chain crosses the membrane as a helical span at residues 20–36 (WLALHTLGVPTVFFLGA). His-24 provides a ligand contact to heme.

The protein belongs to the PsbE/PsbF family. As to quaternary structure, heterodimer of an alpha subunit and a beta subunit. PSII is composed of 1 copy each of membrane proteins PsbA, PsbB, PsbC, PsbD, PsbE, PsbF, PsbH, PsbI, PsbJ, PsbK, PsbL, PsbM, PsbT, PsbX, PsbY, PsbZ, Psb30/Ycf12, peripheral proteins PsbO, CyanoQ (PsbQ), PsbU, PsbV and a large number of cofactors. It forms dimeric complexes. Requires heme b as cofactor.

It localises to the cellular thylakoid membrane. Its function is as follows. This b-type cytochrome is tightly associated with the reaction center of photosystem II (PSII). PSII is a light-driven water:plastoquinone oxidoreductase that uses light energy to abstract electrons from H(2)O, generating O(2) and a proton gradient subsequently used for ATP formation. It consists of a core antenna complex that captures photons, and an electron transfer chain that converts photonic excitation into a charge separation. The chain is Cytochrome b559 subunit beta from Parasynechococcus marenigrum (strain WH8102).